Consider the following 527-residue polypeptide: MSYPLEEVNKRRTFAIISHPDAGKTTITEKVLLYGNAIQTAGSVKGKGSAAHAKSDWMEMEKQRGISITTSVMQFPYNDCLVNLLDTPGHEDFSEDTYRTLTAVDSCLMVIDSAKGVEERTIKLMEVTRLRDTPIITFMNKLDRDIRDPIELLDEVENVLKIRCAPITWPIGCGKLFKGVYHLAKDETYLYQSGQGSTIQAVRVVKGLNNPELDVAVGDDLAQQLREELELVQGASNEFEQDAFIKGELTPVFFGTALGNFGVDHFLDGLTQWAPKPQSRQADTRTVESAEEKFSGFVFKIQANMDPKHRDRVAFMRVVSGKYEKGMKLKHVRIGKDVVISDALTFMAGDRAHAEEAYAGDIIGLHNHGTIQIGDTFTQGETLKFTGIPNFAPELFRRIRLKDPLKQKQLLKGLVQLSEEGAVQVFRPLLNNDLIVGAVGVLQFDVVVSRLKTEYNVEAIYENVNVATARWVECADEKKFEEFKRKNEQNLALDGGDNLTYIAPTMVNLNLAQERYPDVVFYKTREH.

In terms of domain architecture, tr-type G spans 9–278 (NKRRTFAIIS…GLTQWAPKPQ (270 aa)). Residues 18–25 (SHPDAGKT), 86–90 (DTPGH), and 140–143 (NKLD) contribute to the GTP site.

Belongs to the TRAFAC class translation factor GTPase superfamily. Classic translation factor GTPase family. PrfC subfamily.

Its subcellular location is the cytoplasm. Its function is as follows. Increases the formation of ribosomal termination complexes and stimulates activities of RF-1 and RF-2. It binds guanine nucleotides and has strong preference for UGA stop codons. It may interact directly with the ribosome. The stimulation of RF-1 and RF-2 is significantly reduced by GTP and GDP, but not by GMP. The sequence is that of Peptide chain release factor 3 (prfC) from Haemophilus influenzae (strain ATCC 51907 / DSM 11121 / KW20 / Rd).